Consider the following 60-residue polypeptide: Large ribosomal subunit protein bL32 (60 aa).

The segment covering 1 to 16 has biased composition (basic residues); that stretch reads MAVPRRKTSPSRRGMR. The segment at 1–60 is disordered; it reads MAVPRRKTSPSRRGMRRSADAIKKPTYVEDKDSGELRRPHHLDLKTGMYKGRQVLKKKDA. The segment covering 17–44 has biased composition (basic and acidic residues); that stretch reads RSADAIKKPTYVEDKDSGELRRPHHLDL.

The protein belongs to the bacterial ribosomal protein bL32 family.

The sequence is that of Large ribosomal subunit protein bL32 from Bradyrhizobium sp. (strain BTAi1 / ATCC BAA-1182).